The chain runs to 315 residues: PIH1 domain-containing protein 2 (315 aa).

The protein belongs to the PIH1 family.

The polypeptide is PIH1 domain-containing protein 2 (PIH1D2) (Bos taurus (Bovine)).